A 126-amino-acid chain; its full sequence is Class I hydrophobin 1 (126 aa).

A signal peptide spans 1 to 16 (MQYMTIVAFLAATVAA). Cystine bridges form between cysteine 38/cysteine 100, cysteine 46/cysteine 94, cysteine 47/cysteine 75, and cysteine 101/cysteine 119.

It belongs to the fungal hydrophobin family.

It localises to the secreted. It is found in the cell wall. In terms of biological role, aerial growth, conidiation, and dispersal of filamentous fungi in the environment rely upon a capability of their secreting small amphipathic proteins called hydrophobins (HPBs) with low sequence identity. Class I can self-assemble into an outermost layer of rodlet bundles on aerial cell surfaces, conferring cellular hydrophobicity that supports fungal growth, development and dispersal; whereas Class II form highly ordered films at water-air interfaces through intermolecular interactions but contribute nothing to the rodlet structure. HYD1 and HYD2 are required for the structural integrity of the long aerial chains of microconidia. Does not seem to be important for the ability to cause seedling disease. The protein is Class I hydrophobin 1 of Gibberella moniliformis (Maize ear and stalk rot fungus).